Consider the following 690-residue polypeptide: Kelch-like protein 8 (690 aa).

Positions 111–178 constitute a BTB domain; that stretch reads CDVELLVAGS…IYTDKIAITM (68 aa). The BACK domain occupies 213-314; it reads CMSLYHFSDI…VGWNFLCEAV (102 aa). Kelch repeat units follow at residues 383–430, 431–477, 478–524, 525–571, 572–618, and 620–665; these read AIFC…SANG, NLYA…SIEN, VIYA…VIGR, YLFA…VLDG, YLYA…ALGG, and VYAI…WANV.

Component of the BCR(kel-8) E3 ubiquitin ligase complex, at least composed of cul-3, kel-8 and rbx-1. Interacts with rpy-1. Expressed in neurons.

The protein localises to the synapse. The protein operates within protein modification; protein ubiquitination. Substrate-specific adapter of a BCR (BTB-CUL3-RBX1) E3 ubiquitin ligase complex that regulates degradation of glutamate receptors in neurons. The BCR(kel-8) ubiquitin ligase complex mediates ubiquitination and subsequent degradation of rpy-1. Indirectly regulates the protein turnover of glr-1, possibly via ubiquitination and degradation of rpy-1. The polypeptide is Kelch-like protein 8 (kel-8) (Caenorhabditis elegans).